An 83-amino-acid chain; its full sequence is Putative membrane protein insertion efficiency factor (83 aa).

Residues lysine 62 to lysine 83 form a disordered region.

It belongs to the UPF0161 family.

It is found in the cell inner membrane. In terms of biological role, could be involved in insertion of integral membrane proteins into the membrane. The polypeptide is Putative membrane protein insertion efficiency factor (Chlorobaculum tepidum (strain ATCC 49652 / DSM 12025 / NBRC 103806 / TLS) (Chlorobium tepidum)).